Reading from the N-terminus, the 200-residue chain is NADH-quinone oxidoreductase subunit C (200 aa).

The protein belongs to the complex I 30 kDa subunit family. NDH-1 is composed of 14 different subunits. Subunits NuoB, C, D, E, F, and G constitute the peripheral sector of the complex.

Its subcellular location is the cell inner membrane. It catalyses the reaction a quinone + NADH + 5 H(+)(in) = a quinol + NAD(+) + 4 H(+)(out). In terms of biological role, NDH-1 shuttles electrons from NADH, via FMN and iron-sulfur (Fe-S) centers, to quinones in the respiratory chain. The immediate electron acceptor for the enzyme in this species is believed to be ubiquinone. Couples the redox reaction to proton translocation (for every two electrons transferred, four hydrogen ions are translocated across the cytoplasmic membrane), and thus conserves the redox energy in a proton gradient. The protein is NADH-quinone oxidoreductase subunit C of Thiobacillus denitrificans (strain ATCC 25259 / T1).